We begin with the raw amino-acid sequence, 223 residues long: DNA-directed RNA polymerase III subunit RPC7 (223 aa).

Positions 111–124 are enriched in basic and acidic residues; sequence MMPRKKCKKGDPKS. The disordered stretch occupies residues 111 to 223; that stretch reads MMPRKKCKKG…SDDNMDEATY (113 aa). Position 134 is a phosphothreonine (threonine 134). A compositionally biased stretch (basic and acidic residues) spans 144-156; it reads KTIEELEKRGEGE. Phosphoserine is present on serine 158. Acidic residues-rich tracts occupy residues 173–198 and 206–223; these read KDDE…EEND and NGDD…EATY.

Belongs to the eukaryotic RPC7 RNA polymerase subunit family. In terms of assembly, component of the RNA polymerase III complex consisting of 17 subunits: a ten-subunit horseshoe-shaped catalytic core composed of POLR3A/RPC1, POLR3B/RPC2, POLR1C/RPAC1, POLR1D/RPAC2, POLR3K/RPC10, POLR2E/RPABC1, POLR2F/RPABC2, POLR2H/RPABC3, POLR2K/RPABC4 and POLR2L/RPABC5; a mobile stalk composed of two subunits POLR3H/RPC8 and CRCP/RPC9, protruding from the core and functioning primarily in transcription initiation; and additional subunits homologous to general transcription factors of the RNA polymerase II machinery, POLR3C/RPC3-POLR3F/RPC6-POLR3G/RPC7 heterotrimer required for transcription initiation and POLR3D/RPC4-POLR3E/RPC5 heterodimer involved in both transcription initiation and termination. Directly interacts with POLR3C/RPC62. Also found in a trimeric complex with POLR3C/RPC3 and POLR3GL. As to expression, expressed at low levels in the liver.

The protein localises to the nucleus. It is found in the cytoplasm. In terms of biological role, DNA-dependent RNA polymerase catalyzes the transcription of DNA into RNA using the four ribonucleoside triphosphates as substrates. Specific peripheric component of RNA polymerase III (Pol III) which synthesizes small non-coding RNAs including 5S rRNA, snRNAs, tRNAs and miRNAs from at least 500 distinct genomic loci. Acts as a long tether that bridges POLR3C/RPC3-POLR3F/RPC6-POLR3G/RPC7 heterotrimer and the mobile stalk of Pol III, coordinating the dynamics of Pol III stalk and clamp modules during the transition from apo to elongation state. Pol III exists as two alternative complexes defined by the mutually exclusive incorporation of subunit POLR3G/RPC7alpha or POLR3GL/RPC7beta. POLR3G/RPC7alpha modulates Pol III transcriptome by specifically enhancing the transcription of snaR-A non-coding RNAs. At resting state, occupies the active site of apo Pol III and keeps Pol III in an autoinhibitory mode, preventing non-specific transcription. Pol III plays a key role in sensing and limiting infection by intracellular bacteria and DNA viruses. Acts as a nuclear and cytosolic DNA sensor involved in innate immune response. Can sense non-self dsDNA that serves as template for transcription into dsRNA. The non-self RNA polymerase III transcripts, such as Epstein-Barr virus-encoded RNAs (EBERs), induce type I interferon and NF-kappa-B through the RIG-I pathway. The chain is DNA-directed RNA polymerase III subunit RPC7 (Polr3g) from Mus musculus (Mouse).